The primary structure comprises 352 residues: Protein-glutamate methylesterase/protein-glutamine glutaminase 2 (352 aa).

The 119-residue stretch at 6-124 (KVLIVEDSLV…NAGYDTMAAK (119 aa)) folds into the Response regulatory domain. Aspartate 57 is modified (4-aspartylphosphate). The CheB-type methylesterase domain maps to 162-343 (PGTYSMVGIV…LPLPAIAARL (182 aa)). Active-site residues include serine 173, histidine 200, and aspartate 292.

This sequence belongs to the CheB family. In terms of processing, phosphorylated by CheA. Phosphorylation of the N-terminal regulatory domain activates the methylesterase activity.

Its subcellular location is the cytoplasm. It carries out the reaction [protein]-L-glutamate 5-O-methyl ester + H2O = L-glutamyl-[protein] + methanol + H(+). It catalyses the reaction L-glutaminyl-[protein] + H2O = L-glutamyl-[protein] + NH4(+). In terms of biological role, involved in chemotaxis. Part of a chemotaxis signal transduction system that modulates chemotaxis in response to various stimuli. Catalyzes the demethylation of specific methylglutamate residues introduced into the chemoreceptors (methyl-accepting chemotaxis proteins or MCP) by CheR. Also mediates the irreversible deamidation of specific glutamine residues to glutamic acid. The chain is Protein-glutamate methylesterase/protein-glutamine glutaminase 2 from Paramagnetospirillum magneticum (strain ATCC 700264 / AMB-1) (Magnetospirillum magneticum).